Here is a 298-residue protein sequence, read N- to C-terminus: Serpentine receptor class delta-34 (298 aa).

The next 6 helical transmembrane spans lie at 10 to 30 (SSIMTMEANFFMCIIVVFTQV), 54 to 74 (ACFFSFDFFQLVFDASSFAIP), 99 to 119 (MILLSSYLLSLIVGVIYVITY), 158 to 178 (LATNLNMISIFVPPIMSIVFI), 207 to 227 (LTIQTLVPAVCVIPIYIAHLI), and 242 to 262 (VLYMMLSLPTAIDAFIVIVTI).

It belongs to the nematode receptor-like protein srd family.

It is found in the membrane. This chain is Serpentine receptor class delta-34 (srd-34), found in Caenorhabditis elegans.